A 753-amino-acid polypeptide reads, in one-letter code: LIM domain and actin-binding protein 1 (753 aa).

Met1 is subject to N-acetylmethionine. Phosphoserine is present on Ser15. Residues 46 to 56 (EEANMERKKNN) show a composition bias toward basic and acidic residues. Disordered stretches follow at residues 46 to 66 (EEAN…HFRR) and 82 to 186 (GAEF…TSGK). The residue at position 132 (Ser132) is a Phosphoserine. Positions 143 to 152 (PRSENSHDFK) are enriched in basic and acidic residues. The Required for interaction with NPC1L1 signature appears at 164 to 166 (CLG). A compositionally biased stretch (basic and acidic residues) spans 167–177 (DSRHEAEKPET). Phosphoserine is present on residues Ser225, Ser230, Ser242, and Ser263. Disordered regions lie at residues 276-326 (AAVS…VSTT) and 341-379 (TCNS…TAKK). Positions 278–291 (VSKQSSPASYTNEL) are enriched in polar residues. Basic and acidic residues predominate over residues 292–305 (KTSESKTHKWEQKE). Positions 342-351 (CNSQVKSEAQ) are enriched in polar residues. Residues Ser348, Ser360, Ser367, and Ser372 each carry the phosphoserine modification. Residues 363 to 375 (ARTSSLPESSPSK) show a composition bias toward polar residues. In terms of domain architecture, LIM zinc-binding spans 386–446 (ESCVECQKTV…KPHFNQLFKS (61 aa)). Lys437 is subject to N6-succinyllysine. Ser467, Ser485, and Ser488 each carry phosphoserine. Disordered stretches follow at residues 467–493 (SDNE…GVED), 505–669 (SMEA…FELE), and 682–703 (EDDN…GWSG). Positions 491–511 (VEDAPIAKVGVLAASMEAKAS) are required for interaction with MYO5B. 2 stretches are compositionally biased toward basic and acidic residues: residues 512–525 (SQRE…ETKK) and 554–565 (WPPEDDVCKTEA). Over residues 598 to 609 (SSIKSPKASSPS) the composition is skewed to low complexity. Phosphoserine is present on residues Ser599, Ser602, Ser607, and Ser615. Basic and acidic residues predominate over residues 630–666 (MERKQTENARPSGEKENVGKSRWQGEEVPRSKDRSSF). Phosphoserine occurs at positions 692, 720, and 735.

Interacts with NPC1L1; bridges NPC1L1 with MYO5B. Interacts with MYO5B; bridges MYO5B with NPC1L1. Interacts with PXN; this complex stabilizes actin dynamics. Binds to G-actin and F-actin. Interacts with LUZP1 (via C-terminus); both proteins restrict ciliation and may work together to regulate this process. Binds RAB40B (GTP-bound); interaction influences LIMA1 subcellular localization in lamellipodia during cell migration. Post-translationally, phosphorylation of the C-terminal region by MAPK1/MAPK3 reduces its association with F-actin and contributes to actin filament reorganization and enhances cell motility. In terms of processing, ubiquitinated by the ECS(RAB40B) complex leading to its degradation. In terms of tissue distribution, highly expressed in the small intestine, including the duodenum, jejunum, and ileum. Low expression in the liver and very low expressed in the heart, spleen, lung, brain, and pancreas. Isoform Alpha is highly expressed in embryos from day 7-11 and in adult spleen and lung. Isoform Beta expression is highest in adult kidney, testis, lung and liver, intermediate in heart, brain, spleen, skeletal muscle and low in embryos.

The protein resides in the cytoplasm. The protein localises to the cell junction. It is found in the focal adhesion. It localises to the cytoskeleton. Its subcellular location is the stress fiber. The protein resides in the cell membrane. The protein localises to the cell projection. It is found in the ruffle. It localises to the lamellipodium. Functionally, actin-binding protein involved in actin cytoskeleton regulation and dynamics. Increases the number and size of actin stress fibers and inhibits membrane ruffling. Inhibits actin filament depolymerization. Bundles actin filaments, delays filament nucleation and reduces formation of branched filaments. Acts as a negative regulator of primary cilium formation. Plays a role in cholesterol homeostasis. Influences plasma cholesterol levels through regulation of intestinal cholesterol absorption. May act as a scaffold protein by regulating NPC1L1 transportation, an essential protein for cholesterol absorption, to the plasma membrane by recruiting MYO5B to NPC1L1, and thus facilitates cholesterol uptake. This chain is LIM domain and actin-binding protein 1 (Lima1), found in Mus musculus (Mouse).